A 24-amino-acid chain; its full sequence is Brevinin-1La (24 aa).

Cys18 and Cys24 form a disulfide bridge.

As to expression, expressed by the skin glands.

It localises to the secreted. In terms of biological role, antibacterial activity against Gram-positive bacterium S.aureus and Gram-negative bacterium E.coli. The protein is Brevinin-1La of Rana luteiventris (Columbia spotted frog).